Reading from the N-terminus, the 76-residue chain is Small ribosomal subunit protein bS18 (76 aa).

Belongs to the bacterial ribosomal protein bS18 family. As to quaternary structure, part of the 30S ribosomal subunit. Forms a tight heterodimer with protein bS6.

Its function is as follows. Binds as a heterodimer with protein bS6 to the central domain of the 16S rRNA, where it helps stabilize the platform of the 30S subunit. The chain is Small ribosomal subunit protein bS18 from Symbiobacterium thermophilum (strain DSM 24528 / JCM 14929 / IAM 14863 / T).